Here is a 129-residue protein sequence, read N- to C-terminus: Histone H2A.J (129 aa).

The disordered stretch occupies residues methionine 1–alanine 22. 2 positions are modified to N6-acetyllysine: lysine 6 and lysine 10. A compositionally biased stretch (basic residues) spans glutamine 7–serine 19. At lysine 10 the chain carries N6-lactoyllysine; alternate. Glutamine 105 carries the N5-methylglutamine modification. Threonine 121 is subject to Phosphothreonine; by DCAF1.

The protein belongs to the histone H2A family. The nucleosome is a histone octamer containing two molecules each of H2A, H2B, H3 and H4 assembled in one H3-H4 heterotetramer and two H2A-H2B heterodimers. The octamer wraps approximately 147 bp of DNA. Monoubiquitination of Lys-120 (H2AXK119ub) gives a specific tag for epigenetic transcriptional repression. Following DNA double-strand breaks (DSBs), it is ubiquitinated through 'Lys-63' linkage of ubiquitin moieties. Post-translationally, glutamine methylation at Gln-105 (H2AQ104me) by FBL is specifically dedicated to polymerase I. It is present at 35S ribosomal DNA locus and impairs binding of the FACT complex. In terms of processing, phosphorylation on Ser-2 (H2AS1ph) is enhanced during mitosis. Phosphorylation on Ser-2 by RPS6KA5/MSK1 directly represses transcription. Acetylation of H3 inhibits Ser-2 phosphorylation by RPS6KA5/MSK1. Phosphorylation at Thr-121 (H2AT120ph) by DCAF1 is present in the regulatory region of many tumor suppresor genes and down-regulates their transcription.

The protein resides in the nucleus. Its subcellular location is the chromosome. In terms of biological role, core component of nucleosome. Nucleosomes wrap and compact DNA into chromatin, limiting DNA accessibility to the cellular machineries which require DNA as a template. Histones thereby play a central role in transcription regulation, DNA repair, DNA replication and chromosomal stability. DNA accessibility is regulated via a complex set of post-translational modifications of histones, also called histone code, and nucleosome remodeling. The polypeptide is Histone H2A.J (Mus musculus (Mouse)).